Consider the following 630-residue polypeptide: DNA topoisomerase 4 subunit B (630 aa).

ATP is bound by residues Tyr5, Asn42, Asp69, 110 to 116 (GLHGVGI), and Lys334. One can recognise a Toprim domain in the interval 412–525 (TELFLVEGDS…NGHVYVALPP (114 aa)). Glu418, Asp490, and Asp492 together coordinate Mg(2+).

This sequence belongs to the type II topoisomerase family. ParE type 1 subfamily. In terms of assembly, heterotetramer composed of ParC and ParE. It depends on Mg(2+) as a cofactor. Requires Mn(2+) as cofactor. Ca(2+) is required as a cofactor.

The enzyme catalyses ATP-dependent breakage, passage and rejoining of double-stranded DNA.. Its function is as follows. Topoisomerase IV is essential for chromosome segregation. It relaxes supercoiled DNA. Performs the decatenation events required during the replication of a circular DNA molecule. The protein is DNA topoisomerase 4 subunit B of Salmonella typhi.